The primary structure comprises 843 residues: Potassium transporter 10 (843 aa).

Residues 1–15 are compositionally biased toward low complexity; it reads MKSPSPVDPESPSSP. The interval 1 to 25 is disordered; sequence MKSPSPVDPESPSSPDCKGGSSSKR. Residues 1 to 34 are Cytoplasmic-facing; the sequence is MKSPSPVDPESPSSPDCKGGSSSKRRRLPWRMTM. Residues 35–55 traverse the membrane as a helical segment; it reads SLAYQSLGVVYGDLSTSPLYV. Over 56-72 the chain is Vacuolar; the sequence is YKAAFAEDIQHSETNEE. A helical transmembrane segment spans residues 73 to 93; it reads ILGVLSFVFWTLTLVPLLKYV. Residues 94-183 are Cytoplasmic-facing; sequence CVVLRADDNG…LLERHKVLQR (90 aa). The chain crosses the membrane as a helical span at residues 184–204; sequence VLLVLALVGTCMVIGDGVLTP. Residues 205 to 225 lie on the Vacuolar side of the membrane; it reads AISVFSAVSGLELSMEKHQHK. The chain crosses the membrane as a helical span at residues 226–246; the sequence is YVEVPIACFVLVCLFCLQHYG. Topologically, residues 247–249 are cytoplasmic; that stretch reads THR. A helical membrane pass occupies residues 250–270; it reads VGFLFAPIVITWLLCISMIGV. The Vacuolar segment spans residues 271–298; the sequence is YNIVHWEPNVYRALSPYYMYKFLKKTQR. A helical membrane pass occupies residues 299 to 319; the sequence is GGWMSLGGILLCITGSEAMFA. Residues 320–326 are Cytoplasmic-facing; sequence DLGHFNQ. Residues 327–347 form a helical membrane-spanning segment; that stretch reads LSIQIAFTCMVYPSLILAYMG. Topologically, residues 348-377 are vacuolar; sequence QAAYLCKHHIIESDYRIGFYVSVPEKIRWP. Residues 378–398 form a helical membrane-spanning segment; it reads VLAIAILAAVVGSQAVITGTF. Residues 399-425 are Cytoplasmic-facing; that stretch reads SMIKQCTALGCFPRVKIVHTSDKVHGQ. Residues 426-446 traverse the membrane as a helical segment; it reads IYIPEINWILMILCLAITIGF. Residues 447-451 are Vacuolar-facing; it reads RDTKH. Residues 452–472 form a helical membrane-spanning segment; sequence LGNASGLAVITVMLVTTCLMS. Residues 473–482 lie on the Cytoplasmic side of the membrane; it reads LVIVLCWHKS. The helical transmembrane segment at 483-505 threads the bilayer; that stretch reads IFLAFGFIIFFGTIEALYFSASL. Residues 506–510 are Vacuolar-facing; sequence IKFRE. The chain crosses the membrane as a helical span at residues 511–531; it reads GAWVPIVLAFIFMAIMCIWHY. Residues 532–843 are Cytoplasmic-facing; that stretch reads GTIKKYEFDL…TLEVGMIYYV (312 aa). The disordered stretch occupies residues 667-747; the sequence is AASSKPKNVC…IMSPSPSPPP (81 aa). Over residues 718–735 the composition is skewed to gly residues; that stretch reads GGSGSGSGRGSSRGGGGA.

The protein belongs to the HAK/KUP transporter (TC 2.A.72.3) family. As to expression, expressed in roots, shoots, and panicle at flowering stage.

It localises to the vacuole membrane. High-affinity potassium transporter. The protein is Potassium transporter 10 (HAK10) of Oryza sativa subsp. japonica (Rice).